Reading from the N-terminus, the 880-residue chain is Beta-glucosidase 2 (880 aa).

The signal sequence occupies residues 1–17 (MLLILELLVLIIGLGVA). 3 N-linked (GlcNAc...) asparagine glycosylation sites follow: asparagine 24, asparagine 77, and asparagine 271. Aspartate 299 is a catalytic residue. Asparagine 336, asparagine 343, asparagine 376, asparagine 548, asparagine 589, asparagine 712, asparagine 743, and asparagine 794 each carry an N-linked (GlcNAc...) asparagine glycan.

The protein belongs to the glycosyl hydrolase 3 family.

It catalyses the reaction Hydrolysis of terminal, non-reducing beta-D-glucosyl residues with release of beta-D-glucose.. It functions in the pathway glycan metabolism; cellulose degradation. The protein is Beta-glucosidase 2 (BGL2) of Saccharomycopsis fibuligera (Yeast).